Here is a 494-residue protein sequence, read N- to C-terminus: Autocrine proliferation repressor protein A (494 aa).

The N-terminal stretch at 1-18 (MSKLLILLLLSLVASIFS) is a signal peptide. N-linked (GlcNAc...) asparagine glycans are attached at residues Asn37, Asn153, and Asn302.

It belongs to the pqaA family. In terms of assembly, interacts with cfaD.

The protein resides in the secreted. Its function is as follows. Inhibitor that slows proliferation of secreting cells (also known as chalone). May function by binding to cell surface receptors. Requires cfaD for activity. Overexpression slows proliferation. This chain is Autocrine proliferation repressor protein A (aprA), found in Dictyostelium discoideum (Social amoeba).